Reading from the N-terminus, the 263-residue chain is Nitrogenase iron protein 2 (263 aa).

9-16 (GKGGIGKS) lines the ATP pocket. Residue C92 coordinates [4Fe-4S] cluster. An ADP-ribosylarginine; by dinitrogenase reductase ADP-ribosyltransferase modification is found at R95. [4Fe-4S] cluster is bound at residue C127.

The protein belongs to the NifH/BchL/ChlL family. As to quaternary structure, homodimer. [4Fe-4S] cluster is required as a cofactor. Post-translationally, the reversible ADP-ribosylation of Arg-95 inactivates the nitrogenase reductase and regulates nitrogenase activity.

It carries out the reaction N2 + 8 reduced [2Fe-2S]-[ferredoxin] + 16 ATP + 16 H2O = H2 + 8 oxidized [2Fe-2S]-[ferredoxin] + 2 NH4(+) + 16 ADP + 16 phosphate + 6 H(+). In terms of biological role, the key enzymatic reactions in nitrogen fixation are catalyzed by the nitrogenase complex, which has 2 components: the iron protein and the molybdenum-iron protein. The protein is Nitrogenase iron protein 2 (nifH2) of Methanobacterium ivanovii.